Here is a 792-residue protein sequence, read N- to C-terminus: Chloride channel protein CLC-d (792 aa).

A run of 12 helical transmembrane segments spans residues 78–98, 119–139, 170–190, 195–215, 237–257, 267–287, 320–340, 361–381, 451–471, 474–494, 508–528, and 529–549; these read FFSLLIGIGTGLAAVFINLSV, AGFIVYLLINLVLVFSSAYII, RTLIGKIFGSIGSVGGGLALG, LVHTGACIASLLGQGGSTKYH, GCAAGVAAAFRAPVGGVLFAL, QLMWRVFFTSAIVAVVVRTAM, LLPMAVIGVIGGLLGALFNQL, IIEACIISCITSAISFGLPLL, LLTFLAMFYTLAVVTFGTAVP, QFVPGIMIGSTYGRLVGMFVV, ALLGAASFLGGSMRMTVSLCV, and IMVEITNNLKLLPLIMLVLLI. CBS domains are found at residues 592–652 and 704–761; these read QSQK…KVDF and LNPS…SSAV. The chain crosses the membrane as a helical span at residues 731 to 751; it reads HLFVVPRPSRVIGLITRKDLL.

Belongs to the chloride channel (TC 2.A.49) family. As to quaternary structure, homodimer. As to expression, broadly expressed in the plant, but predominantly in the silique.

It localises to the membrane. Voltage-gated chloride channel. The chain is Chloride channel protein CLC-d (CLC-D) from Arabidopsis thaliana (Mouse-ear cress).